We begin with the raw amino-acid sequence, 420 residues long: Na(+)/H(+) antiporter NhaA (420 aa).

A run of 11 helical transmembrane segments spans residues 4–24 (VWNF…IALI), 70–90 (DLLM…AVIL), 104–124 (LVAT…IAYF), 132–152 (AVAN…YLVG), 165–185 (FLLL…AIFY), 192–212 (PAWL…ANWL), 233–250 (LSFW…YGFM), 299–319 (VEII…SAMG), 323–343 (WLVL…FGWL), 361–381 (LVVI…VASV), and 395–415 (GALF…LTQV).

It belongs to the NhaA Na(+)/H(+) (TC 2.A.33) antiporter family.

The protein resides in the cell inner membrane. The enzyme catalyses Na(+)(in) + 2 H(+)(out) = Na(+)(out) + 2 H(+)(in). Functionally, na(+)/H(+) antiporter that extrudes sodium in exchange for external protons. This Jannaschia sp. (strain CCS1) protein is Na(+)/H(+) antiporter NhaA.